The primary structure comprises 732 residues: Ferric aerobactin receptor (732 aa).

An N-terminal signal peptide occupies residues 1 to 25; sequence MMISKKYTLWALNPLLLTMMAPAVA. The short motif at 31 to 38 is the TonB box element; it reads ETFVVSAN. The TBDR plug domain occupies 43–153; the sequence is TVAEMAQTTW…TGGLINIVTK (111 aa). The TBDR beta-barrel domain occupies 158 to 732; sequence ETMMEFEAGT…TFGLNYSVLF (575 aa). Positions 715-732 match the TonB C-terminal box motif; the sequence is YDYKGRGRTFGLNYSVLF.

It belongs to the TonB-dependent receptor family.

The protein resides in the cell outer membrane. Receptor for cloacin DF13/aerobactin. The chain is Ferric aerobactin receptor (iutA) from Escherichia coli.